The primary structure comprises 1026 residues: Exportin-T (1026 aa).

Belongs to the exportin family.

It is found in the nucleus. The protein localises to the cytoplasm. In terms of biological role, tRNA nucleus export receptor which facilitates tRNA translocation across the nuclear pore complex. Involved in pre-tRNA splicing, probably by affecting the interaction of pre-tRNA with splicing endonuclease. This Aspergillus oryzae (strain ATCC 42149 / RIB 40) (Yellow koji mold) protein is Exportin-T (los1).